Consider the following 71-residue polypeptide: Small ribosomal subunit protein bS18 (71 aa).

The protein belongs to the bacterial ribosomal protein bS18 family. In terms of assembly, part of the 30S ribosomal subunit. Forms a tight heterodimer with protein bS6.

Binds as a heterodimer with protein bS6 to the central domain of the 16S rRNA, where it helps stabilize the platform of the 30S subunit. This chain is Small ribosomal subunit protein bS18, found in Nostoc punctiforme (strain ATCC 29133 / PCC 73102).